Reading from the N-terminus, the 137-residue chain is Kunitz-type trypsin inhibitor alpha chain (137 aa).

A disulfide bond links C40 and C86.

This sequence belongs to the protease inhibitor I3 (leguminous Kunitz-type inhibitor) family. As to quaternary structure, heterodimer of an alpha and a beta chain linked by a disulfide bond.

In terms of biological role, inhibition of trypsin. This chain is Kunitz-type trypsin inhibitor alpha chain, found in Neltuma juliflora (Mesquite).